The following is a 218-amino-acid chain: Peptide methionine sulfoxide reductase MsrA (218 aa).

Cysteine 57 is a catalytic residue.

It belongs to the MsrA Met sulfoxide reductase family.

It catalyses the reaction L-methionyl-[protein] + [thioredoxin]-disulfide + H2O = L-methionyl-(S)-S-oxide-[protein] + [thioredoxin]-dithiol. The enzyme catalyses [thioredoxin]-disulfide + L-methionine + H2O = L-methionine (S)-S-oxide + [thioredoxin]-dithiol. Functionally, has an important function as a repair enzyme for proteins that have been inactivated by oxidation. Catalyzes the reversible oxidation-reduction of methionine sulfoxide in proteins to methionine. The polypeptide is Peptide methionine sulfoxide reductase MsrA (Brucella anthropi (Ochrobactrum anthropi)).